The following is an 814-amino-acid chain: Testis-specific zinc finger protein topi (814 aa).

C2H2-type zinc fingers lie at residues 228–250 (NECT…MEKH), 275–297 (VKCN…GLIH), 360–382 (LQCE…SASH), 429–453 (FVCN…TSFH), 467–490 (LPCD…EEKH), 511–533 (YLCD…LRFH), 539–564 (FVCQ…RKCH), 570–592 (YLCL…RLIH), 598–620 (YECE…QRIH), and 626–649 (YSCL…RARH). Residues 669–705 (TAAAQKAQSHNPEQQDNDVAGGASTSDVPSGSGFMST) form a disordered region. Positions 691–705 (ASTSDVPSGSGFMST) are enriched in polar residues.

Interacts with comr. In terms of tissue distribution, expressed in testis; primary spermatocytes.

It localises to the nucleus. In terms of biological role, required for male meiotic division and spermatid differentiation. Required for accumulation of aly and comr on chromatin. May function as a transcription factor. This Drosophila melanogaster (Fruit fly) protein is Testis-specific zinc finger protein topi (topi).